The sequence spans 183 residues: Ribosome-recycling factor (183 aa).

The protein belongs to the RRF family.

The protein resides in the cytoplasm. Functionally, responsible for the release of ribosomes from messenger RNA at the termination of protein biosynthesis. May increase the efficiency of translation by recycling ribosomes from one round of translation to another. This is Ribosome-recycling factor from Deinococcus deserti (strain DSM 17065 / CIP 109153 / LMG 22923 / VCD115).